The sequence spans 1752 residues: Chitin synthase E (1752 aa).

1–8 (GESGSGKT) provides a ligand contact to ATP. Residues 492 to 520 (SSKPLRMPSMARRKTSPSSRLAFDAGDAD) form a disordered region. The actin-binding stretch occupies residues 558–582 (LDIVNKCLSSTNLNPYFIFCLKPND). A run of 2 helical transmembrane segments spans residues 789–809 (WIALVYLLTFYIPDFAIKLFG) and 828–848 (LIIWFSCGVAIFFIVAFPGLV). The Cytochrome b5 heme-binding domain occupies 852-940 (QHVYSAAELS…LLDYRPTNIS (89 aa)). Residues asparagine 938 and asparagine 963 are each glycosylated (N-linked (GlcNAc...) asparagine). A helical transmembrane segment spans residues 1099-1119 (FILAISVLICSIIVFKFLAAL). Asparagine 1322, asparagine 1356, and asparagine 1462 each carry an N-linked (GlcNAc...) asparagine glycan. Transmembrane regions (helical) follow at residues 1494–1514 (LSTVIQPVTLAYIIYLIYWLV), 1520–1540 (IPYTSLILLAAIYGLQALIFI), and 1547–1567 (MVGWMIVYLLALPVFSLPCPS). Asparagine 1685 is a glycosylation site (N-linked (GlcNAc...) asparagine). Residues 1689–1744 (LPSDDAILAEIREILRTADLMSVTKKSIKLELERAFGVNLDLKRPYINSGKGYTFP) form the DEK-C domain.

In the N-terminal section; belongs to the TRAFAC class myosin-kinesin ATPase superfamily. Myosin family. The protein in the C-terminal section; belongs to the chitin synthase family. Class V subfamily.

It localises to the cell membrane. Its subcellular location is the cell septum. It is found in the cell tip. The enzyme catalyses [(1-&gt;4)-N-acetyl-beta-D-glucosaminyl](n) + UDP-N-acetyl-alpha-D-glucosamine = [(1-&gt;4)-N-acetyl-beta-D-glucosaminyl](n+1) + UDP + H(+). In terms of biological role, polymerizes chitin, a structural polymer of the cell wall and septum, by transferring the sugar moiety of UDP-GlcNAc to the non-reducing end of the growing chitin polymer. Important for hyphal growth and conidiophore development but not pathogenicity. In Aspergillus fumigatus (Neosartorya fumigata), this protein is Chitin synthase E.